The chain runs to 399 residues: MADGIDRRNDDRLEFSTSKEVTVAPTFEDMHLKESLLRGIYAYGYESPSAVQSRAIVQICKGRDTIAQAQSGTGKTATFSISILQVIDTAVRETQALVLSPTRELATQIQSVIMALGDYMNVQCHACIGGTNIGEDIRKLDYGQHVVSGTPGRVADMIRRRHLRTRHIKMLVLDEADELLNRGFREQIYDVYRYLPPATQVVVVSATLPYDVLDMTTKFMTDPVRVLVKRDELTLEGIKQYFIAVEKEEWKFDTLCDLYDTLTITQAVIFCNTRRKVDWLTDKMREANFTVSSMHGEMPQKERDSIMQDFRQGNSRVLISTDVWARGIDVQQVSLVINYDLPTNRENYIHRIGRSGRFGRKGVAINFVTSDDVRILRDIELYYSTQIDEMPMNVADLLS.

A Q motif motif is present at residues 25 to 53; it reads PTFEDMHLKESLLRGIYAYGYESPSAVQS. Residues 56 to 226 form the Helicase ATP-binding domain; it reads IVQICKGRDT…TKFMTDPVRV (171 aa). Residue 69–76 participates in ATP binding; sequence AQSGTGKT. The DEAD box signature appears at 174 to 177; that stretch reads DEAD. The region spanning 237–398 is the Helicase C-terminal domain; the sequence is GIKQYFIAVE…EMPMNVADLL (162 aa).

The protein belongs to the DEAD box helicase family. DDX48/FAL1 subfamily.

The protein localises to the nucleus. It is found in the nucleolus. The catalysed reaction is ATP + H2O = ADP + phosphate + H(+). Functionally, ATP-dependent RNA helicase involved in 40S ribosomal subunit biogenesis. Required for the processing and cleavage of 35S pre-rRNA at sites A0, A1, and A2, leading to mature 18S rRNA. The protein is ATP-dependent RNA helicase fal1 (fal1) of Aspergillus clavatus (strain ATCC 1007 / CBS 513.65 / DSM 816 / NCTC 3887 / NRRL 1 / QM 1276 / 107).